The primary structure comprises 494 residues: Alpha-amylase-related protein (494 aa).

A signal peptide spans 1–20; it reads MFKFTFALALCVLAAGLVLA. Q21 is subject to Pyrrolidone carboxylic acid. Residues C48 and C104 are joined by a disulfide bond. Residues N118, Q169, and D178 each contribute to the Ca(2+) site. An intrachain disulfide couples C157 to C171. R206 is a binding site for chloride. Catalysis depends on D208, which acts as the Nucleophile. H212 serves as a coordination point for Ca(2+). Residue E245 is the Proton donor of the active site. Chloride contacts are provided by N308 and R343. 3 disulfide bridges follow: C376/C382, C418/C441, and C448/C460.

It belongs to the glycosyl hydrolase 13 family. Monomer. It depends on Ca(2+) as a cofactor. Chloride is required as a cofactor.

Its subcellular location is the secreted. The enzyme catalyses Endohydrolysis of (1-&gt;4)-alpha-D-glucosidic linkages in polysaccharides containing three or more (1-&gt;4)-alpha-linked D-glucose units.. The chain is Alpha-amylase-related protein (Amyrel) from Drosophila pseudoobscura pseudoobscura (Fruit fly).